Reading from the N-terminus, the 124-residue chain is MGDRNLTPKQFGALGEQYAAAWLEEHGWTTLSRNWHTRYGELDIVMLNPEYTVVFVEVKSRRSMHYGYPQEAITPAKQHNLRKAACDWLLDRRNRVPHTAVRFDVVTIVLRVGRPLVHHIENAF.

The protein belongs to the UPF0102 family.

The protein is UPF0102 protein Blon_1698/BLIJ_1758 of Bifidobacterium longum subsp. infantis (strain ATCC 15697 / DSM 20088 / JCM 1222 / NCTC 11817 / S12).